The primary structure comprises 140 residues: Nucleoside diphosphate kinase (140 aa).

K11, F59, R87, T93, R104, and N114 together coordinate ATP. The active-site Pros-phosphohistidine intermediate is the H117.

This sequence belongs to the NDK family. In terms of assembly, homotetramer. Requires Mg(2+) as cofactor.

Its subcellular location is the cytoplasm. It catalyses the reaction a 2'-deoxyribonucleoside 5'-diphosphate + ATP = a 2'-deoxyribonucleoside 5'-triphosphate + ADP. The enzyme catalyses a ribonucleoside 5'-diphosphate + ATP = a ribonucleoside 5'-triphosphate + ADP. Major role in the synthesis of nucleoside triphosphates other than ATP. The ATP gamma phosphate is transferred to the NDP beta phosphate via a ping-pong mechanism, using a phosphorylated active-site intermediate. The chain is Nucleoside diphosphate kinase from Francisella philomiragia subsp. philomiragia (strain ATCC 25017 / CCUG 19701 / FSC 153 / O#319-036).